The following is a 381-amino-acid chain: 1-deoxy-D-xylulose 5-phosphate reductoisomerase (381 aa).

NADPH-binding residues include threonine 10, glycine 11, serine 12, isoleucine 13, asparagine 38, and asparagine 121. A 1-deoxy-D-xylulose 5-phosphate-binding site is contributed by lysine 122. Residue glutamate 123 participates in NADPH binding. Aspartate 147 is a Mn(2+) binding site. Serine 148, glutamate 149, serine 173, and histidine 196 together coordinate 1-deoxy-D-xylulose 5-phosphate. Glutamate 149 is a Mn(2+) binding site. An NADPH-binding site is contributed by glycine 202. 1-deoxy-D-xylulose 5-phosphate contacts are provided by serine 209, asparagine 214, lysine 215, and glutamate 218. Mn(2+) is bound at residue glutamate 218.

This sequence belongs to the DXR family. Mg(2+) is required as a cofactor. Mn(2+) serves as cofactor.

The catalysed reaction is 2-C-methyl-D-erythritol 4-phosphate + NADP(+) = 1-deoxy-D-xylulose 5-phosphate + NADPH + H(+). It participates in isoprenoid biosynthesis; isopentenyl diphosphate biosynthesis via DXP pathway; isopentenyl diphosphate from 1-deoxy-D-xylulose 5-phosphate: step 1/6. Catalyzes the NADPH-dependent rearrangement and reduction of 1-deoxy-D-xylulose-5-phosphate (DXP) to 2-C-methyl-D-erythritol 4-phosphate (MEP). The chain is 1-deoxy-D-xylulose 5-phosphate reductoisomerase from Alkaliphilus oremlandii (strain OhILAs) (Clostridium oremlandii (strain OhILAs)).